We begin with the raw amino-acid sequence, 246 residues long: Proteasome subunit alpha (246 aa).

Belongs to the peptidase T1A family. In terms of assembly, the 20S proteasome core is composed of 14 alpha and 14 beta subunits that assemble into four stacked heptameric rings, resulting in a barrel-shaped structure. The two inner rings, each composed of seven catalytic beta subunits, are sandwiched by two outer rings, each composed of seven alpha subunits. The catalytic chamber with the active sites is on the inside of the barrel. Has a gated structure, the ends of the cylinder being occluded by the N-termini of the alpha-subunits. Is capped at one or both ends by the proteasome regulatory ATPase, PAN.

It is found in the cytoplasm. The formation of the proteasomal ATPase PAN-20S proteasome complex, via the docking of the C-termini of PAN into the intersubunit pockets in the alpha-rings, triggers opening of the gate for substrate entry. Interconversion between the open-gate and close-gate conformations leads to a dynamic regulation of the 20S proteasome proteolysis activity. Functionally, component of the proteasome core, a large protease complex with broad specificity involved in protein degradation. This chain is Proteasome subunit alpha, found in Methanopyrus kandleri (strain AV19 / DSM 6324 / JCM 9639 / NBRC 100938).